We begin with the raw amino-acid sequence, 360 residues long: Putative F-box protein At1g65770 (360 aa).

The region spanning 2–50 (ADWSTLPVDLLNMIAGRLFSNIELKRFRSICRSWRSSVPGAGKKNPFRT) is the F-box domain.

The chain is Putative F-box protein At1g65770 from Arabidopsis thaliana (Mouse-ear cress).